The chain runs to 202 residues: B-cell CLL/lymphoma 7 protein family member B (202 aa).

The tract at residues 53 to 202 (DSKEKEKSKS…PVVPQTTSES (150 aa)) is disordered. Polar residues predominate over residues 90 to 99 (ENSNQSSVSD). Low complexity predominate over residues 107–123 (SSTNSSPSPQQSESLSP). A phosphoserine mark is found at serine 114, serine 118, serine 120, serine 122, serine 127, serine 148, and serine 152.

The protein belongs to the BCL7 family.

Positive regulator of apoptosis. Plays a role in the Wnt signaling pathway, negatively regulating the expression of Wnt signaling components CTNNB1 and HMGA1. Involved in cell cycle progression, maintenance of the nuclear structure and stem cell differentiation. May play a role in lung tumor development or progression. This Mus musculus (Mouse) protein is B-cell CLL/lymphoma 7 protein family member B (Bcl7b).